Reading from the N-terminus, the 950-residue chain is Calcium-transporting ATPase 1 (950 aa).

S2 is subject to N-acetylserine. The Cytoplasmic segment spans residues 2 to 92 (SDNPFNASLL…SLFKKFLSNF (91 aa)). Residues 93–111 (IEDRMILLLIGSAVVSLFM) traverse the membrane as a helical segment. At 112 to 116 (GNIDD) the chain is on the lumenal side. A helical transmembrane segment spans residues 117-133 (AVSITLAIFIVVTVGFV). The Cytoplasmic segment spans residues 134-288 (QEYRSEKSLE…LQLTMDKLGK (155 aa)). The residue at position 227 (S227) is a Phosphoserine. The helical transmembrane segment at 289–309 (DLSLVSFIVIGMICLVGIIQG) threads the bilayer. Residues 310–323 (RSWLEMFQISVSLA) are Lumenal-facing. Residues 324–344 (VAAIPEGLPIIVTVTLALGVL) form a helical membrane-spanning segment. Residues 345–814 (RMAKRKAIVR…KILTHDVMKR (470 aa)) lie on the Cytoplasmic side of the membrane. Residue D371 is the 4-aspartylphosphate intermediate of the active site. The helical transmembrane segment at 815–835 (LLTTAACIIVGTVYIFVKEMA) threads the bilayer. Residues 836–844 (EDGKVTARD) are Lumenal-facing. A helical membrane pass occupies residues 845 to 862 (TTMTFTCFVFFDMFNALA). The Cytoplasmic portion of the chain corresponds to 863–884 (CRHNTKSIFEIGFFTNKMFNYA). A helical membrane pass occupies residues 885–905 (VGLSLLGQMCAIYIPFFQSIF). At 906–909 (KTEK) the chain is on the lumenal side. The chain crosses the membrane as a helical span at residues 910–930 (LGISDILLLLLISSSVFIVDE). At 931-950 (LRKLWTRKKNEEDSTYFSNV) the chain is on the cytoplasmic side.

Belongs to the cation transport ATPase (P-type) (TC 3.A.3) family.

It localises to the golgi apparatus membrane. It catalyses the reaction Ca(2+)(in) + ATP + H2O = Ca(2+)(out) + ADP + phosphate + H(+). In terms of biological role, this magnesium-dependent enzyme catalyzes the hydrolysis of ATP coupled with the transport of calcium. Has a role in the secretory pathway. The chain is Calcium-transporting ATPase 1 (PMR1) from Saccharomyces cerevisiae (strain ATCC 204508 / S288c) (Baker's yeast).